A 150-amino-acid polypeptide reads, in one-letter code: MQIWVDADACPNVIKEVLFRAADRTQMQVTLVANQTIKVPPSRFISTLRVAAGFDVADNEIVRSVESGDLVITADIPLASEVIEKGGIALNPRGERYTPDTIRERLNMRDFMDTMRASGIQTGGPSTLNQRDRQQFANELDKWLQQVRKS.

The protein belongs to the UPF0178 family.

In Pectobacterium atrosepticum (strain SCRI 1043 / ATCC BAA-672) (Erwinia carotovora subsp. atroseptica), this protein is UPF0178 protein ECA0873.